A 436-amino-acid chain; its full sequence is Putative actin-fragmin kinase DDB_G0268748 (436 aa).

Residues 14–58 are disordered; that stretch reads DKNIDSGSSSSNIGGSSSNSSGTTNKRSSGNFNGSSASSSPSSST. The span at 18–57 shows a compositional bias: low complexity; it reads DSGSSSSNIGGSSSNSSGTTNKRSSGNFNGSSASSSPSSS.

Belongs to the protein kinase superfamily. AFK Ser/Thr protein kinase family.

In Dictyostelium discoideum (Social amoeba), this protein is Putative actin-fragmin kinase DDB_G0268748.